The chain runs to 305 residues: Cytochrome c biogenesis protein CcsA (305 aa).

8 helical membrane-spanning segments follow: residues 13-33 (IYFS…VYPV), 42-62 (KGII…WFYS), 70-90 (LYES…FIDI), 97-117 (WIGV…TLIL), 135-155 (WLIM…CGSL), 212-232 (YTIV…AVWA), 242-262 (WDPK…YIHI), and 276-296 (VASL…ILGI).

This sequence belongs to the CcmF/CycK/Ccl1/NrfE/CcsA family. May interact with Ccs1.

It localises to the plastid. The protein localises to the chloroplast thylakoid membrane. Required during biogenesis of c-type cytochromes (cytochrome c6 and cytochrome f) at the step of heme attachment. This Welwitschia mirabilis (Tree tumbo) protein is Cytochrome c biogenesis protein CcsA.